Here is a 440-residue protein sequence, read N- to C-terminus: Streptokinase (440 aa).

A signal peptide spans 1–26; that stretch reads MKNYLSFGMFALLFALTFGTVKPVQA. Residues 72 to 94 are disordered; it reads PAQGGKTEQGLRPKSKPLATDKG.

Its function is as follows. This protein is not a protease, but it activates plasminogen by complexing with it. As a potential virulence factor, it is thought to prevent the formation of effective fibrin barriers around the site of infection, thereby contributing to the invasiveness of the cells. The polypeptide is Streptokinase (ska) (Streptococcus pyogenes).